A 344-amino-acid chain; its full sequence is Phosphoribosylformylglycinamidine cyclo-ligase (344 aa).

Belongs to the AIR synthase family.

It is found in the cytoplasm. The enzyme catalyses 2-formamido-N(1)-(5-O-phospho-beta-D-ribosyl)acetamidine + ATP = 5-amino-1-(5-phospho-beta-D-ribosyl)imidazole + ADP + phosphate + H(+). Its pathway is purine metabolism; IMP biosynthesis via de novo pathway; 5-amino-1-(5-phospho-D-ribosyl)imidazole from N(2)-formyl-N(1)-(5-phospho-D-ribosyl)glycinamide: step 2/2. This chain is Phosphoribosylformylglycinamidine cyclo-ligase, found in Neisseria meningitidis serogroup C / serotype 2a (strain ATCC 700532 / DSM 15464 / FAM18).